Here is a 161-residue protein sequence, read N- to C-terminus: Peroxynitrite isomerase 2 (161 aa).

The GXWXGXG signature appears at 17–23 (GTWAGQG). Residue His152 coordinates heme b.

Belongs to the nitrobindin family. Homodimer. Requires heme b as cofactor.

It catalyses the reaction peroxynitrite = nitrate. The protein operates within nitrogen metabolism. In terms of biological role, heme-binding protein able to scavenge peroxynitrite and to protect free L-tyrosine against peroxynitrite-mediated nitration, by acting as a peroxynitrite isomerase that converts peroxynitrite to nitrate. Therefore, this protein likely plays a role in peroxynitrite sensing and in the detoxification of reactive nitrogen and oxygen species (RNS and ROS, respectively). Is able to bind nitric oxide (NO) in vitro, but may act as a sensor of peroxynitrite levels in vivo. This chain is Peroxynitrite isomerase 2, found in Mycobacterium ulcerans (strain Agy99).